Here is a 268-residue protein sequence, read N- to C-terminus: CCAAT/enhancer-binding protein delta (268 aa).

3 disordered regions span residues 1 to 48, 97 to 132, and 152 to 219; these read MSAA…LGST, GLEL…DAPG, and AAQP…NQEM. Ser-2 carries the post-translational modification N-acetylserine. A Glycyl lysine isopeptide (Lys-Gly) (interchain with G-Cter in SUMO) cross-link involves residue Lys-120. Over residues 155–167 the composition is skewed to pro residues; it reads PTPPTSPEPPRGS. Positions 177–201 are enriched in basic and acidic residues; sequence VREKGAGKRGPDRGSPEYRQRRERN. A bZIP domain is found at 191-254; sequence SPEYRQRRER…AGLRQFFKKL (64 aa). A basic motif region spans residues 195-222; it reads RQRRERNNIAVRKSRDKAKRRNQEMQQK. Residues 226–254 are leucine-zipper; sequence LSAENEKLHQRVEQLTRDLAGLRQFFKKL.

Belongs to the bZIP family. C/EBP subfamily. As to quaternary structure, binds DNA as a homodimer and as a heterodimer. Can form stable heterodimers with CEBPA, CEBPB and CEBPE. Directly interacts with SPI1/PU.1; this interaction does not affect DNA-binding properties of each partner. Interacts with PRDM16.

It localises to the nucleus. Transcription activator that recognizes two different DNA motifs: the CCAAT homology common to many promoters and the enhanced core homology common to many enhancers. Important transcription factor regulating the expression of genes involved in immune and inflammatory responses. Transcriptional activator that enhances IL6 transcription alone and as heterodimer with CEBPB. This chain is CCAAT/enhancer-binding protein delta (Cebpd), found in Mus musculus (Mouse).